A 619-amino-acid chain; its full sequence is Dynein axonemal intermediate chain 2 (619 aa).

WD repeat units follow at residues 214-254, 261-302, 362-401, 405-445, and 450-489; these read KPSS…LVAE, SHRD…EPTE, GHHG…SSIM, YHMA…CDPA, and VCDD…STLQ. The interval 566-619 is disordered; sequence EALKKKPKPKKASIEVEGEDELEDIAGEEEESGIIMGEDTGEDDMDEKNEGGAP. Positions 581–597 are enriched in acidic residues; the sequence is VEGEDELEDIAGEEEES.

This sequence belongs to the dynein intermediate chain family. As to quaternary structure, consists of at least two heavy chains and a number of intermediate and light chains. Interacts with DNAAF2. Interacts with DNAAF6/PIH1D3. Interacts with HEATR2; probably involved in outer arm dynein assembly. Interacts with CFAP53.

The protein resides in the cytoplasm. The protein localises to the cytoskeleton. It localises to the cilium axoneme. It is found in the dynein axonemal particle. Part of the dynein complex of respiratory cilia. This Rattus norvegicus (Rat) protein is Dynein axonemal intermediate chain 2 (Dnai2).